Here is a 62-residue protein sequence, read N- to C-terminus: Large ribosomal subunit protein uL30 (62 aa).

The protein belongs to the universal ribosomal protein uL30 family. As to quaternary structure, part of the 50S ribosomal subunit.

The chain is Large ribosomal subunit protein uL30 from Thioalkalivibrio sulfidiphilus (strain HL-EbGR7).